The primary structure comprises 230 residues: Ribonuclease 3 (230 aa).

Residues 5 to 134 (EALLKSSFAI…FLGALLLDKG (130 aa)) enclose the RNase III domain. Mg(2+) is bound at residue E47. Residue D51 is part of the active site. Residues D120 and E123 each coordinate Mg(2+). E123 is a catalytic residue. One can recognise a DRBM domain in the interval 160–229 (DYKTSLQEIL…AENALKALSE (70 aa)).

It belongs to the ribonuclease III family. Homodimer. Mg(2+) serves as cofactor.

The protein resides in the cytoplasm. The catalysed reaction is Endonucleolytic cleavage to 5'-phosphomonoester.. In terms of biological role, digests double-stranded RNA. Involved in the processing of primary rRNA transcript to yield the immediate precursors to the large and small rRNAs (23S and 16S). Processes some mRNAs, and tRNAs when they are encoded in the rRNA operon. Processes pre-crRNA and tracrRNA of type II CRISPR loci if present in the organism. This chain is Ribonuclease 3, found in Streptococcus uberis (strain ATCC BAA-854 / 0140J).